A 224-amino-acid chain; its full sequence is Ribonuclease HII (224 aa).

The 192-residue stretch at 33–224 folds into the RNase H type-2 domain; it reads FHVAGVDEVG…LKERYRNDVS (192 aa). A divalent metal cation contacts are provided by D39, E40, and D131.

This sequence belongs to the RNase HII family. The cofactor is Mn(2+). Mg(2+) serves as cofactor.

The protein localises to the cytoplasm. It carries out the reaction Endonucleolytic cleavage to 5'-phosphomonoester.. Its function is as follows. Endonuclease that specifically degrades the RNA of RNA-DNA hybrids. The chain is Ribonuclease HII from Bartonella tribocorum (strain CIP 105476 / IBS 506).